The sequence spans 294 residues: Proteasome subunit beta (294 aa).

Residues 1 to 65 (MTADRPALRT…MESGDLAPHG (65 aa)) constitute a propeptide, removed in mature form; by autocatalysis. The Nucleophile role is filled by Thr66.

This sequence belongs to the peptidase T1B family. In terms of assembly, the 20S proteasome core is composed of 14 alpha and 14 beta subunits that assemble into four stacked heptameric rings, resulting in a barrel-shaped structure. The two inner rings, each composed of seven catalytic beta subunits, are sandwiched by two outer rings, each composed of seven alpha subunits. The catalytic chamber with the active sites is on the inside of the barrel. Has a gated structure, the ends of the cylinder being occluded by the N-termini of the alpha-subunits. Is capped by the proteasome-associated ATPase, ARC.

It localises to the cytoplasm. The enzyme catalyses Cleavage of peptide bonds with very broad specificity.. The protein operates within protein degradation; proteasomal Pup-dependent pathway. Its activity is regulated as follows. The formation of the proteasomal ATPase ARC-20S proteasome complex, likely via the docking of the C-termini of ARC into the intersubunit pockets in the alpha-rings, may trigger opening of the gate for substrate entry. Interconversion between the open-gate and close-gate conformations leads to a dynamic regulation of the 20S proteasome proteolysis activity. In terms of biological role, component of the proteasome core, a large protease complex with broad specificity involved in protein degradation. This is Proteasome subunit beta from Rhodococcus jostii (strain RHA1).